Consider the following 467-residue polypeptide: MKQFMDENFLLSTDTAKILYHDYAKNKPIFDYHCHLNPREVAENRQFNDLAEIWLEGDHYKWRALRTAGVPEELITGKATNYQKYLAWAKTVPLCIGNPIYHWTHLELRRPFGITNMLFNPQNAEKIWHQCNEMLQQPEFSARGIMQKMNVKLVGTTDDPIDSLQYHQAIKNDESFDIDVVPSWRPDKVFKIELPQFNDYLVQLSEIADVDIYTFADLKKALLKRLEYFDAQGCKSADHGMEIVRFSAIPDESVLNSILQKRLQNQPLLEEEVAQFSTAILVWLASEYCKRHWVMQMHIGAIRNNNSRMFALLGADSGFDSIGDRTYAYPLSRLLDAMDKENQLPKTILYCLNPRDNEMIASMIGNFQGDGIAGKIQFGSGWWFNDQKDGMERQLQQLSQLGLLSQFVGMLTDSRSFLSYTRHEYFRRILCEMIGGWVEKGEAPNDISLLGKMIEDICFNNAKNYFK.

The protein belongs to the metallo-dependent hydrolases superfamily. Uronate isomerase family.

The catalysed reaction is D-glucuronate = D-fructuronate. It catalyses the reaction aldehydo-D-galacturonate = keto-D-tagaturonate. It participates in carbohydrate metabolism; pentose and glucuronate interconversion. The sequence is that of Uronate isomerase from Haemophilus influenzae (strain 86-028NP).